The following is a 216-amino-acid chain: Large ribosomal subunit protein uL3 (216 aa).

Positions Gly-137–Thr-157 are disordered.

The protein belongs to the universal ribosomal protein uL3 family. In terms of assembly, part of the 50S ribosomal subunit. Forms a cluster with proteins L14 and L19.

Functionally, one of the primary rRNA binding proteins, it binds directly near the 3'-end of the 23S rRNA, where it nucleates assembly of the 50S subunit. The chain is Large ribosomal subunit protein uL3 from Paenarthrobacter aurescens (strain TC1).